The primary structure comprises 380 residues: Transmembrane protein 229A (380 aa).

Positions 1–40 (MAGSDVDSEGPARRGGAARRPGAPGGPGSEAAAGCPEPLS) are disordered. 2 helical membrane passes run 51–71 (LPAW…DVLV) and 117–137 (AFVF…TLAG). The disordered stretch occupies residues 188-236 (RQQQQQQQQQQQQRRGALPVPPGARVPTAAGARRRRPRGPRGAGGAPSQ). Residues 190–202 (QQQQQQQQQQQRR) are compositionally biased toward low complexity. 4 consecutive transmembrane segments (helical) span residues 244 to 264 (FLFF…FFNV), 278 to 298 (LWSF…YFHL), 310 to 330 (VPIY…GLRT), and 343 to 363 (LNFM…LSVY).

It belongs to the TMEM229 family.

The protein resides in the membrane. The protein is Transmembrane protein 229A (TMEM229A) of Homo sapiens (Human).